The following is a 516-amino-acid chain: Nucleolar complex protein 4 homolog (516 aa).

A run of 3 helical transmembrane segments spans residues 296-316, 347-367, and 375-395; these read SACD…FILI, FFHL…LVAA, and LALT…CNLL.

Belongs to the CBF/MAK21 family.

Its subcellular location is the nucleus membrane. It is found in the nucleus. The protein localises to the nucleolus. This chain is Nucleolar complex protein 4 homolog (Noc4l), found in Rattus norvegicus (Rat).